Consider the following 309-residue polypeptide: Testis-expressed protein 264 homolog (309 aa).

Topologically, residues 1-3 are lumenal; the sequence is MPD. The chain crosses the membrane as a helical; Signal-anchor for type III membrane protein span at residues 4-24; sequence LLLLGLIGALTLLLLLTLLAF. The Cytoplasmic segment spans residues 25-309; the sequence is AGYSGLLTGV…ELSTPERGEE (285 aa). The segment at 193–309 is disordered; the sequence is PEVKETERKC…ELSTPERGEE (117 aa). The span at 208–225 shows a compositional bias: low complexity; that stretch reads ATDTQTDGTGADTSDASS. A phosphoserine mark is found at Ser238 and Ser243. Residues 250–262 are compositionally biased toward basic and acidic residues; sequence GWDDGDNRSEHSY. Residues 263 to 272 are compositionally biased toward low complexity; that stretch reads SESGASGSSF. The LIR motif signature appears at 272-275; the sequence is FEEL.

In terms of assembly, interacts (via the LIR motif) with ATG8 family proteins MAP1LC3A, MAP1LC3B, GABARAP and GABARAPL1. Interacts with VCP/p97; bridging VCP/p97 to covalent DNA-protein cross-links (DPCs). Interacts with TOP1 (when sumoylated).

Its subcellular location is the endoplasmic reticulum membrane. The protein resides in the cytoplasmic vesicle. The protein localises to the autophagosome. It is found in the cytoplasm. It localises to the cytosol. Its subcellular location is the nucleus. The protein resides in the chromosome. Major reticulophagy (also called ER-phagy) receptor that acts independently of other candidate reticulophagy receptors to remodel subdomains of the endoplasmic reticulum into autophagosomes upon nutrient stress, which then fuse with lysosomes for endoplasmic reticulum turnover. The ATG8-containing isolation membrane (IM) cradles a tubular segment of TEX264-positive ER near a three-way junction, allowing the formation of a synapse of 2 juxtaposed membranes with trans interaction between the TEX264 and ATG8 proteins. Expansion of the IM would extend the capture of ER, possibly through a 'zipper-like' process involving continued trans TEX264-ATG8 interactions, until poorly understood mechanisms lead to the fission of relevant membranes and, ultimately, autophagosomal membrane closure. Also involved in the repair of covalent DNA-protein cross-links (DPCs) during DNA synthesis: acts by bridging VCP/p97 to covalent DNA-protein cross-links (DPCs) and initiating resolution of DPCs by SPRTN. This Mus musculus (Mouse) protein is Testis-expressed protein 264 homolog.